A 404-amino-acid polypeptide reads, in one-letter code: Probable oxalate decarboxylase ARB_04859 (404 aa).

The N-terminal stretch at 1-17 is a signal peptide; that stretch reads MKYSAVLVAALAAIADA. A Cupin type-1 1 domain is found at 74 to 215; sequence FSLSKTRMLY…NFGVPPSTFD (142 aa). His117, His119, Glu123, and His162 together coordinate Mn(2+). N-linked (GlcNAc...) asparagine glycosylation is found at Asn226 and Asn244. Positions 249-393 constitute a Cupin type-1 2 domain; that stretch reads FHISNAPEIQ…AINVPIEVIE (145 aa). Residues His296, His298, Glu303, and His342 each coordinate Mn(2+). Asn346 carries N-linked (GlcNAc...) asparagine glycosylation. Glu357 functions as the Proton donor in the catalytic mechanism.

The cofactor is Mn(2+).

The protein resides in the secreted. It carries out the reaction oxalate + H(+) = formate + CO2. Its function is as follows. Converts oxalate to formate and CO(2) in an O(2)-dependent reaction. Can also catalyze minor side reactions: oxalate oxidation to produce H(2)O(2), and oxalate-dependent, H(2)O(2)-independent dye oxidations. The sequence is that of Probable oxalate decarboxylase ARB_04859 from Arthroderma benhamiae (strain ATCC MYA-4681 / CBS 112371) (Trichophyton mentagrophytes).